The following is a 792-amino-acid chain: Phenylalanine--tRNA ligase beta subunit (792 aa).

A tRNA-binding domain is found at 38–148 (NTKLAGFIVA…DDYKVGNKFF (111 aa)). One can recognise a B5 domain in the interval 406–482 (EADTKVSFDY…RIYGYDKIKE (77 aa)). The Mg(2+) site is built by Asp460, Asp466, Glu469, and Glu470. An FDX-ACB domain is found at 698–790 (YKHQSVKRDF…VHKNTGGILR (93 aa)).

The protein belongs to the phenylalanyl-tRNA synthetase beta subunit family. Type 1 subfamily. As to quaternary structure, tetramer of two alpha and two beta subunits. Requires Mg(2+) as cofactor.

The protein resides in the cytoplasm. The enzyme catalyses tRNA(Phe) + L-phenylalanine + ATP = L-phenylalanyl-tRNA(Phe) + AMP + diphosphate + H(+). This Wolbachia sp. subsp. Brugia malayi (strain TRS) protein is Phenylalanine--tRNA ligase beta subunit.